A 457-amino-acid chain; its full sequence is Probable ubiquitin carboxyl-terminal hydrolase 16 (457 aa).

The interval 34–97 (VSSPSVPEGT…DGANDFVDED (64 aa)) is disordered. The segment covering 45 to 67 (TVLNNPKQSTVSRKSFSAPTSPT) has biased composition (polar residues). Serine 61 bears the Phosphoserine mark. Threonine 64 bears the Phosphothreonine mark. The residue at position 65 (serine 65) is a Phosphoserine. The 305-residue stretch at 125–429 (PGLVNLGNTC…QAYILQYKRK (305 aa)) folds into the USP domain. Cysteine 134 serves as the catalytic Nucleophile. Catalysis depends on histidine 388, which acts as the Proton acceptor. The segment at 434 to 457 (SKHKLNTENTVTKTSNKKRRKISF) is disordered. Positions 448 to 457 (SNKKRRKISF) are enriched in basic residues.

The protein belongs to the peptidase C19 family.

The enzyme catalyses Thiol-dependent hydrolysis of ester, thioester, amide, peptide and isopeptide bonds formed by the C-terminal Gly of ubiquitin (a 76-residue protein attached to proteins as an intracellular targeting signal).. The polypeptide is Probable ubiquitin carboxyl-terminal hydrolase 16 (ubp16) (Schizosaccharomyces pombe (strain 972 / ATCC 24843) (Fission yeast)).